We begin with the raw amino-acid sequence, 337 residues long: Ketol-acid reductoisomerase (NADP(+)) (337 aa).

The KARI N-terminal Rossmann domain occupies Val-3 to Thr-183. Residues Tyr-26–Gln-29, Lys-49, Ser-52, Ser-54, and Asp-84–Gln-87 each bind NADP(+). Residue His-109 is part of the active site. Gly-135 is a binding site for NADP(+). Residues Thr-184–Val-329 form the KARI C-terminal knotted domain. Mg(2+) is bound by residues Asp-192, Glu-196, Glu-228, and Glu-232. Ser-253 lines the substrate pocket.

The protein belongs to the ketol-acid reductoisomerase family. It depends on Mg(2+) as a cofactor.

It carries out the reaction (2R)-2,3-dihydroxy-3-methylbutanoate + NADP(+) = (2S)-2-acetolactate + NADPH + H(+). The enzyme catalyses (2R,3R)-2,3-dihydroxy-3-methylpentanoate + NADP(+) = (S)-2-ethyl-2-hydroxy-3-oxobutanoate + NADPH + H(+). It functions in the pathway amino-acid biosynthesis; L-isoleucine biosynthesis; L-isoleucine from 2-oxobutanoate: step 2/4. It participates in amino-acid biosynthesis; L-valine biosynthesis; L-valine from pyruvate: step 2/4. Involved in the biosynthesis of branched-chain amino acids (BCAA). Catalyzes an alkyl-migration followed by a ketol-acid reduction of (S)-2-acetolactate (S2AL) to yield (R)-2,3-dihydroxy-isovalerate. In the isomerase reaction, S2AL is rearranged via a Mg-dependent methyl migration to produce 3-hydroxy-3-methyl-2-ketobutyrate (HMKB). In the reductase reaction, this 2-ketoacid undergoes a metal-dependent reduction by NADPH to yield (R)-2,3-dihydroxy-isovalerate. The chain is Ketol-acid reductoisomerase (NADP(+)) from Mycolicibacterium gilvum (strain PYR-GCK) (Mycobacterium gilvum (strain PYR-GCK)).